The primary structure comprises 285 residues: Eukaryotic translation initiation factor 3 subunit J (285 aa).

Disordered stretches follow at residues 1–86 (MSWD…QLDE) and 232–285 (QARL…DDFM). Acidic residues predominate over residues 22–41 (WEDEEDDGPVLESWDVDPEE). Positions 36 to 81 (DVDPEEEEKKKKEAKLQEAKRKAELKAKEDAEKAKKDAKRKELEQF) form a coiled coil. The segment covering 42 to 86 (EEKKKKEAKLQEAKRKAELKAKEDAEKAKKDAKRKELEQFDQLDE) has biased composition (basic and acidic residues). Acidic residues predominate over residues 269-285 (DDMDDGQFDDLDDDDFM).

Belongs to the eIF-3 subunit J family. In terms of assembly, component of the eukaryotic translation initiation factor 3 (eIF-3) complex.

It is found in the cytoplasm. Functionally, component of the eukaryotic translation initiation factor 3 (eIF-3) complex, which is involved in protein synthesis of a specialized repertoire of mRNAs and, together with other initiation factors, stimulates binding of mRNA and methionyl-tRNAi to the 40S ribosome. The eIF-3 complex specifically targets and initiates translation of a subset of mRNAs involved in cell proliferation. The protein is Eukaryotic translation initiation factor 3 subunit J of Candida albicans (strain SC5314 / ATCC MYA-2876) (Yeast).